Here is a 259-residue protein sequence, read N- to C-terminus: Proteasome subunit alpha (259 aa).

It belongs to the peptidase T1A family. The 20S proteasome core is composed of 14 alpha and 14 beta subunits that assemble into four stacked heptameric rings, resulting in a barrel-shaped structure. The two inner rings, each composed of seven catalytic beta subunits, are sandwiched by two outer rings, each composed of seven alpha subunits. The catalytic chamber with the active sites is on the inside of the barrel. Has a gated structure, the ends of the cylinder being occluded by the N-termini of the alpha-subunits. Is capped at one or both ends by the proteasome regulatory ATPase, PAN.

It is found in the cytoplasm. With respect to regulation, the formation of the proteasomal ATPase PAN-20S proteasome complex, via the docking of the C-termini of PAN into the intersubunit pockets in the alpha-rings, triggers opening of the gate for substrate entry. Interconversion between the open-gate and close-gate conformations leads to a dynamic regulation of the 20S proteasome proteolysis activity. In terms of biological role, component of the proteasome core, a large protease complex with broad specificity involved in protein degradation. The polypeptide is Proteasome subunit alpha (Methanococcus maripaludis (strain DSM 14266 / JCM 13030 / NBRC 101832 / S2 / LL)).